The chain runs to 401 residues: NADH-quinone oxidoreductase subunit D (401 aa).

Belongs to the complex I 49 kDa subunit family. NDH-1 is composed of 15 different subunits. Subunits NuoB, C, D, E, F, and G constitute the peripheral sector of the complex.

The protein localises to the cell membrane. It carries out the reaction a quinone + NADH + 5 H(+)(in) = a quinol + NAD(+) + 4 H(+)(out). NDH-1 shuttles electrons from NADH, via FMN and iron-sulfur (Fe-S) centers, to quinones in the respiratory chain. The immediate electron acceptor for the enzyme in this species is believed to be a menaquinone. Couples the redox reaction to proton translocation (for every two electrons transferred, four hydrogen ions are translocated across the cytoplasmic membrane), and thus conserves the redox energy in a proton gradient. This is NADH-quinone oxidoreductase subunit D from Deinococcus radiodurans (strain ATCC 13939 / DSM 20539 / JCM 16871 / CCUG 27074 / LMG 4051 / NBRC 15346 / NCIMB 9279 / VKM B-1422 / R1).